A 538-amino-acid chain; its full sequence is Lipid scramblase CLPTM1L (538 aa).

At M1 to S9 the chain is on the cytoplasmic side. A helical membrane pass occupies residues L10–V30. Residues Y31–L284 are Extracellular-facing. 2 N-linked (GlcNAc...) asparagine glycosylation sites follow: N90 and N100. The disordered stretch occupies residues I140–P166. Residue N229 is glycosylated (N-linked (GlcNAc...) asparagine). The helical transmembrane segment at Y285–F305 threads the bilayer. Residues K306–K324 lie on the Cytoplasmic side of the membrane. Residues A325–L341 traverse the membrane as a helical segment. Residues D342–K402 are Extracellular-facing. A helical membrane pass occupies residues Y403–V423. The Cytoplasmic portion of the chain corresponds to K424–W428. A helical membrane pass occupies residues Y429 to L449. The Extracellular portion of the chain corresponds to P450–D538.

It belongs to the CLPTM1 family.

It is found in the endoplasmic reticulum membrane. It carries out the reaction a 6-(alpha-D-glucosaminyl)-1-(1,2-diacyl-sn-glycero-3-phospho)-1D-myo-inositol(in) = a 6-(alpha-D-glucosaminyl)-1-(1,2-diacyl-sn-glycero-3-phospho)-1D-myo-inositol(out). It catalyses the reaction 6-(alpha-D-glucosaminyl)-(1-octadecanoyl,2-(9Z)-octadecenoyl-sn-glycero-3-phospho)-1D-myo-inositol(in) = 6-(alpha-D-glucosaminyl)-(1-octadecanoyl,2-(9Z)-octadecenoyl-sn-glycero-3-phospho)-1D-myo-inositol(out). The catalysed reaction is a 1,2-diacyl-sn-glycero-3-phospho-(1D-myo-inositol)(in) = a 1,2-diacyl-sn-glycero-3-phospho-(1D-myo-inositol)(out). The enzyme catalyses a 1,2-diacyl-sn-glycero-3-phosphocholine(in) = a 1,2-diacyl-sn-glycero-3-phosphocholine(out). It carries out the reaction a 1,2-diacyl-sn-glycero-3-phosphoethanolamine(in) = a 1,2-diacyl-sn-glycero-3-phosphoethanolamine(out). Scramblase that mediates the translocation of glucosaminylphosphatidylinositol (alpha-D-GlcN-(1-6)-(1,2-diacyl-sn-glycero-3-phospho)-1D-myo-inositol, GlcN-PI) across the endoplasmic reticulum (ER) membrane, from the cytosolic leaflet to the luminal leaflet of the ER membrane, where it participates in the biosynthesis of glycosylphosphatidylinositol (GPI). GPI is a lipid glycoconjugate involved in post-translational modification of proteins. Can also translocate 1,2-diacyl-sn-glycero-3-phospho-(1D-myo-inositol) (phosphatidylinositol or PI), as well as several other phospholipids (1,2-diacyl-sn-glycero-3-phosphocholine, 1,2-diacyl-sn-glycero-3-phosphoethanolamine), and N-acetylglucosaminylphosphatidylinositol (GlcNAc-PI) in vitro. This is Lipid scramblase CLPTM1L (clptm1l) from Danio rerio (Zebrafish).